Reading from the N-terminus, the 185-residue chain is Ribosome-recycling factor (185 aa).

The disordered stretch occupies residues 143–163; that stretch reads RKDGEAGEDEVARAEKDLDKS.

This sequence belongs to the RRF family.

The protein resides in the cytoplasm. Functionally, responsible for the release of ribosomes from messenger RNA at the termination of protein biosynthesis. May increase the efficiency of translation by recycling ribosomes from one round of translation to another. The chain is Ribosome-recycling factor from Mycobacterium ulcerans (strain Agy99).